Reading from the N-terminus, the 387-residue chain is Probable NADH-dependent butanol dehydrogenase 1 (387 aa).

Belongs to the iron-containing alcohol dehydrogenase family.

It functions in the pathway alcohol metabolism; butanol biosynthesis. The sequence is that of Probable NADH-dependent butanol dehydrogenase 1 (yugJ) from Bacillus subtilis (strain 168).